A 348-amino-acid polypeptide reads, in one-letter code: Protein RecA (348 aa).

64 to 71 (GPESSGKT) is an ATP binding site. The span at 325–335 (YEIDGSNKEPL) shows a compositional bias: basic and acidic residues. A disordered region spans residues 325–348 (YEIDGSNKEPLDEGEETLSLLDDE). Residues 336–348 (DEGEETLSLLDDE) are compositionally biased toward acidic residues.

This sequence belongs to the RecA family.

It is found in the cytoplasm. In terms of biological role, can catalyze the hydrolysis of ATP in the presence of single-stranded DNA, the ATP-dependent uptake of single-stranded DNA by duplex DNA, and the ATP-dependent hybridization of homologous single-stranded DNAs. It interacts with LexA causing its activation and leading to its autocatalytic cleavage. This is Protein RecA from Listeria monocytogenes serotype 4b (strain CLIP80459).